Reading from the N-terminus, the 855-residue chain is Coiled-coil domain-containing protein 87 (855 aa).

Disordered stretches follow at residues 23-43 (LFPS…QDAT) and 278-302 (SRPS…PTSP). A compositionally biased stretch (low complexity) spans 287–296 (PSHSPSSESH). 2 coiled-coil regions span residues 387 to 413 (TRRL…EASG) and 764 to 789 (RSYL…ESVF).

It belongs to the CCDC87 family. In terms of tissue distribution, specifically expressed in testis (at protein level). Not detected in other tissues tested (at protein level). In the testis, localizes to pachytene spermatocytes and spermatids.

Its function is as follows. Plays a role in spermatogenesis, where it is important for normal sperm head morphology. Also required for the acrosome reaction and thus normal male fertility. This is Coiled-coil domain-containing protein 87 (Ccdc87) from Mus musculus (Mouse).